Consider the following 109-residue polypeptide: Anti-sigma-B factor antagonist (109 aa).

Positions 3–109 constitute an STAS domain; that stretch reads INVDVKQNEN…ISAKSEGGVQ (107 aa). Serine 52 and serine 56 each carry phosphoserine. Threonine 57 carries the post-translational modification Phosphothreonine.

This sequence belongs to the anti-sigma-factor antagonist family. In terms of assembly, monomer. In stressed cells, forms a complex with RsbW. The predominant form of this complex has a stoichiometry of 2:2 (one dimer of RsbW is bound by two monomers of RsbV). Binds to RsbW in the presence of low levels of ATP or under conditions of energy or environmental stress (through dephosphorylation by RsbP or RsbU). Post-translationally, phosphorylated by RsbW on a serine residue. Dephosphorylated by RsbP or RsbU.

Functionally, positive regulator of sigma-B activity. Non-phosphorylated RsbV binds to RsbW, preventing its association with sigma-B. When phosphorylated, releases RsbW, which is then free to complex with and inactivate sigma-B. This is Anti-sigma-B factor antagonist (rsbV) from Bacillus subtilis (strain 168).